Here is a 129-residue protein sequence, read N- to C-terminus: Basic blue protein (129 aa).

The signal sequence occupies residues 1–33 (MAKGRGSASWSARAIVTLMAVSVLLLQADYVQA). The 96-residue stretch at 34 to 129 (ATYTVGDSGI…SDMKIAVTAV (96 aa)) folds into the Phytocyanin domain. Residues histidine 72, cysteine 112, histidine 117, and methionine 122 each coordinate Cu cation. A disulfide bridge connects residues cysteine 85 and cysteine 118.

In terms of tissue distribution, expressed in the inflorescence and in the transmitting tract of the pistil. Detected in roots, stems, cauline leaves, cotyledons, hypocotyls, guard cells, pistils, sepals, stamen filaments and vascular bundles of roots but not of leaves. Not expressed in petals, anthers or pollen.

The protein localises to the secreted. The protein resides in the extracellular space. It is found in the extracellular matrix. Functionally, forms a concentration gradient along the pollen tube growth path, with a lower level in the stigma papilla cell wall and a higher level in the transmitting tract extracellular matix of the style. The protein is Basic blue protein (ARPN) of Arabidopsis thaliana (Mouse-ear cress).